The following is a 54-amino-acid chain: MPKGNRTIIHLVSSAGTGYVYTTTKNKRKSQEKLQLRKYDPRVRKHVLFVEGKP.

The protein belongs to the bacterial ribosomal protein bL33 family.

The protein is Large ribosomal subunit protein bL33B of Myxococcus xanthus (strain DK1622).